The chain runs to 370 residues: MFQASMRSPNMEPFKQQKVEDFYDIGEELGSGQFAIVKKCREKSTGLEYAAKFIKKRQSRASRRGVSREEIEREVSILRQVLHHNVITLHDVYENRTDVVLILELVSGGELFDFLAQKESLSEEEATSFIKQILDGVNYLHTKKIAHFDLKPENIMLLDKNIPIPHIKLIDFGLAHEIEDGVEFKNIFGTPEFVAPEIVNYEPLGLEADMWSIGVITYILLSGASPFLGDTKQETLANITAVSYDFDEEFFSQTSELAKDFIRKLLVKETRKRLTIQEALRHPWITPVDNQQAMVRRESVVNLENFRKQYVRRRWKLSFSIVSLCNHLTRSLMKKVHLRPDEDLRNCESDTEEDIARRKALHPRRRSSTS.

The Protein kinase domain occupies 23–285 (YDIGEELGSG…IQEALRHPWI (263 aa)). Residues 29–37 (LGSGQFAIV) and Lys52 each bind ATP. The Proton acceptor role is filled by Asp149. The calmodulin-binding stretch occupies residues 277–344 (QEALRHPWIT…KVHLRPDEDL (68 aa)). Positions 292–301 (QAMVRRESVV) are autoinhibitory domain. Phosphoserine is present on Ser299. Ser318 carries the post-translational modification Phosphoserine; by autocatalysis. A disordered region spans residues 348 to 370 (ESDTEEDIARRKALHPRRRSSTS). Position 349 is a phosphoserine (Ser349). Residues 358–370 (RKALHPRRRSSTS) are compositionally biased toward basic residues. Phosphothreonine; by PKB/AKT1 is present on Thr369.

This sequence belongs to the protein kinase superfamily. CAMK Ser/Thr protein kinase family. DAP kinase subfamily. As to quaternary structure, homodimer in its autoinhibited state. Active as monomer. Isoform 2 but not isoform 1 can interact with ATF4. Interacts with 14-3-3 proteins YWHAB, YWHAE, YWHAG, YWHAH, YWHAQ, YWHAZ and SFN; the interaction requires DAPK2 phosphorylation at Thr-369 and suppresses DAPK2 kinase activity and DAPK2-induced apoptosis. It depends on Mg(2+) as a cofactor. Autophosphorylation at Ser-318 inhibits its catalytic activity. Dephosphorylated at Ser-318 in response to activated Fas and TNF-alpha receptors. As to expression, expressed in neutrophils and eosinophils. Isoform 2 is expressed in embryonic stem cells (at protein level). Isoform 1 is ubiquitously expressed in all tissue types examined with high levels in heart, lung and skeletal muscle.

The protein localises to the cytoplasm. It localises to the cytoplasmic vesicle. Its subcellular location is the autophagosome lumen. The enzyme catalyses L-seryl-[protein] + ATP = O-phospho-L-seryl-[protein] + ADP + H(+). It carries out the reaction L-threonyl-[protein] + ATP = O-phospho-L-threonyl-[protein] + ADP + H(+). With respect to regulation, activated by Ca(2+)/calmodulin. Regulated by a double locking mechanism, involving autophosphorylation at Ser-318, calmodulin binding, and dimerization. In the inactive state, Ser-318 is phosphorylated, and the kinase is dimeric. Activation involves: dephosphorylation at Ser-318, release-of-autoinhibition mechanism where calmodulin binding induces a conformational change that relieves the steric block of the active site by the autoinhibitory domain, and generation of the monomeric active form of the kinase. Its function is as follows. Calcium/calmodulin-dependent serine/threonine kinase involved in multiple cellular signaling pathways that trigger cell survival, apoptosis, and autophagy. Regulates both type I apoptotic and type II autophagic cell death signals, depending on the cellular setting. The former is caspase-dependent, while the latter is caspase-independent and is characterized by the accumulation of autophagic vesicles. Acts as a mediator of anoikis and a suppressor of beta-catenin-dependent anchorage-independent growth of malignant epithelial cells. May play a role in granulocytic maturation. Regulates granulocytic motility by controlling cell spreading and polarization. Isoform 2 is not regulated by calmodulin. It can phosphorylate MYL9. It can induce membrane blebbing and autophagic cell death. This chain is Death-associated protein kinase 2 (DAPK2), found in Homo sapiens (Human).